Here is an 866-residue protein sequence, read N- to C-terminus: Probable LRR receptor-like serine/threonine-protein kinase At5g16900 (866 aa).

An N-terminal signal peptide occupies residues 1-20; that stretch reads MEDRHRYLFFIFAIIHYVQA. The Extracellular segment spans residues 21 to 515; that stretch reads QQGFISLDCG…SSSGNKETTV (495 aa). Residues Asn-137, Asn-176, Asn-230, Asn-251, Asn-331, Asn-404, Asn-409, and Asn-436 are each glycosylated (N-linked (GlcNAc...) asparagine). LRR repeat units lie at residues 415–438, 439–461, and 463–485; these read RIIS…QNLT, QLQK…LANM, and SLLF…LLDR. Residues Asn-468 and Asn-505 are each glycosylated (N-linked (GlcNAc...) asparagine). A helical membrane pass occupies residues 516-536; that stretch reads IAPVAAAIAIFIAVLVLIIVF. The Cytoplasmic portion of the chain corresponds to 537–866; that stretch reads IKKRPSSIRA…LNQVIDSKSS (330 aa). Thr-564 bears the Phosphothreonine mark. One can recognise a Protein kinase domain in the interval 573–846; the sequence is NNFERVIGEG…HVVQELKQCI (274 aa). Residues 579-587 and Lys-601 contribute to the ATP site; that span reads IGEGGFGVV. Phosphotyrosine is present on Tyr-646. Residue Asp-698 is the Proton acceptor of the active site. Position 732 is a phosphoserine (Ser-732). Phosphothreonine is present on residues Thr-733 and Thr-738. Position 746 is a phosphotyrosine (Tyr-746).

It belongs to the protein kinase superfamily. Ser/Thr protein kinase family.

The protein localises to the membrane. The enzyme catalyses L-seryl-[protein] + ATP = O-phospho-L-seryl-[protein] + ADP + H(+). It carries out the reaction L-threonyl-[protein] + ATP = O-phospho-L-threonyl-[protein] + ADP + H(+). The sequence is that of Probable LRR receptor-like serine/threonine-protein kinase At5g16900 from Arabidopsis thaliana (Mouse-ear cress).